We begin with the raw amino-acid sequence, 181 residues long: Large ribosomal subunit protein uL5 (181 aa).

It belongs to the universal ribosomal protein uL5 family. In terms of assembly, part of the 50S ribosomal subunit; part of the 5S rRNA/L5/L18/L25 subcomplex. Contacts the 5S rRNA and the P site tRNA. Forms a bridge to the 30S subunit in the 70S ribosome.

Functionally, this is one of the proteins that bind and probably mediate the attachment of the 5S RNA into the large ribosomal subunit, where it forms part of the central protuberance. In the 70S ribosome it contacts protein S13 of the 30S subunit (bridge B1b), connecting the 2 subunits; this bridge is implicated in subunit movement. Contacts the P site tRNA; the 5S rRNA and some of its associated proteins might help stabilize positioning of ribosome-bound tRNAs. The protein is Large ribosomal subunit protein uL5 of Acaryochloris marina (strain MBIC 11017).